A 98-amino-acid polypeptide reads, in one-letter code: Large ribosomal subunit protein uL23 (98 aa).

Belongs to the universal ribosomal protein uL23 family. As to quaternary structure, part of the 50S ribosomal subunit. Contacts protein L29, and trigger factor when it is bound to the ribosome.

In terms of biological role, one of the early assembly proteins it binds 23S rRNA. One of the proteins that surrounds the polypeptide exit tunnel on the outside of the ribosome. Forms the main docking site for trigger factor binding to the ribosome. The chain is Large ribosomal subunit protein uL23 from Bordetella petrii (strain ATCC BAA-461 / DSM 12804 / CCUG 43448).